Consider the following 349-residue polypeptide: Nitrilase, bromoxynil-specific (349 aa).

A CN hydrolase domain is found at Phe-5–Leu-274. Catalysis depends on Glu-45, which acts as the Proton acceptor. Lys-127 acts as the Proton donor in catalysis. Cys-161 (nucleophile) is an active-site residue.

Belongs to the carbon-nitrogen hydrolase superfamily. Nitrilase family. In terms of assembly, homodimer.

It catalyses the reaction a nitrile + 2 H2O = a carboxylate + NH4(+). Functionally, specific for the herbicide bromoxynil (3,5-dibromo-4-hydroxybenzonitrile); converts it to its metabolite 3,5-dibromo-4-hydroxybenzoic acid. The protein is Nitrilase, bromoxynil-specific (bxn) of Klebsiella pneumoniae subsp. ozaenae.